Consider the following 374-residue polypeptide: MARSLTWRCCPWCLTEDEKAAARVDQEINRILLEQKKQDRGELKLLLLGPGESGKSTFIKQMRIIHGAGYSEEERKGFRPLVYQNIFVSMRAMIEAMERLQIPFSRPESKHHASLVMSQDPYKVTTFEKRYAAAMQWLWRDAGIRACYERRREFHLLDSAVYYLSHLERITEEGYVPTAQDVLRSRMPTTGINEYCFSVQKTNLRIVDVGGQKSERKKWIHCFENVIALIYLASLSEYDQCLEENNQENRMKESLALFGTILELPWFKSTSVILFLNKTDILEEKIPTSHLATYFPSFQGPKQDAEAAKRFILDMYTRMYTGCVDGPEGSKKGARSRRLFSHYTCATDTQNIRKVFKDVRDSVLARYLDEINLL.

Residues 41 to 374 enclose the G-alpha domain; that stretch reads GELKLLLLGP…ARYLDEINLL (334 aa). The G1 motif stretch occupies residues 44–57; the sequence is KLLLLGPGESGKST. Residues 49–56, 183–189, 208–212, 277–280, and alanine 346 contribute to the GTP site; these read GPGESGKS, LRSRMPT, DVGGQ, and NKTD. Residue serine 56 participates in Mg(2+) binding. The segment at 181 to 189 is G2 motif; that stretch reads DVLRSRMPT. Position 186 is an ADP-ribosylarginine; by cholera toxin (arginine 186). Threonine 189 provides a ligand contact to Mg(2+). The interval 204-213 is G3 motif; that stretch reads LRIVDVGGQK. The G4 motif stretch occupies residues 273–280; it reads ILFLNKTD. The G5 motif stretch occupies residues 344 to 349; that stretch reads TCATDT.

The protein belongs to the G-alpha family. G(q) subfamily. As to quaternary structure, g proteins are composed of 3 units; alpha, beta and gamma. The alpha chain contains the guanine nucleotide binding site. In terms of tissue distribution, specifically expressed in hematopoietic cells. Expressed in epididymis (at protein level).

Its function is as follows. Guanine nucleotide-binding proteins (G proteins) are involved as modulators or transducers in various transmembrane signaling systems. The chain is Guanine nucleotide-binding protein subunit alpha-15 (GNA15) from Homo sapiens (Human).